The primary structure comprises 111 residues: MKKRNISLKSKIEIQKIFKEGNLIRFSNLNLKMFFKSNNLIYSRLLVTFSKGFRGSVKRNRVRRLFKEAFRKRLELLEGRAVDIIFVVSYNRLNLTYFRIESLIKNLVLMV.

Belongs to the RnpA family. Consists of a catalytic RNA component (M1 or rnpB) and a protein subunit.

It carries out the reaction Endonucleolytic cleavage of RNA, removing 5'-extranucleotides from tRNA precursor.. Its function is as follows. RNaseP catalyzes the removal of the 5'-leader sequence from pre-tRNA to produce the mature 5'-terminus. It can also cleave other RNA substrates such as 4.5S RNA. The protein component plays an auxiliary but essential role in vivo by binding to the 5'-leader sequence and broadening the substrate specificity of the ribozyme. This is Ribonuclease P protein component from Borrelia garinii subsp. bavariensis (strain ATCC BAA-2496 / DSM 23469 / PBi) (Borreliella bavariensis).